Here is a 27-residue protein sequence, read N- to C-terminus: HSDGTFTSELSRLRDSARLQRLLQGLV.

Position 27 is a valine amide (valine 27).

The protein belongs to the glucagon family.

It is found in the secreted. Functionally, hormone involved in different processes, such as regulation of the pH of the duodenal content, food intake and water homeostasis. Exerts its biological effects by binding to secretin receptor (SCTR), a G-protein coupled receptor expressed in the basolateral domain of several cells. Acts as a key gastrointestinal hormone by regulating the pH of the duodenal content. Secreted by S cells of the duodenum in the crypts of Lieberkuehn and regulates the pH of the duodenum by (1) inhibiting the secretion of gastric acid from the parietal cells of the stomach and (2) stimulating the production of bicarbonate (NaHCO(3)) from the ductal cells of the pancreas. Production of bicarbonate is essential to neutralize the pH and ensure no damage is done to the small intestine by the gastric acid. In addition to regulating the pH of the duodenal content, plays a central role in diet induced thermogenesis: acts as a non-sympathetic brown fat (BAT) activator mediating prandial thermogenesis, which consequentially induces satiation. Mechanistically, secretin released by the gut after a meal binds to secretin receptor (SCTR) in brown adipocytes, activating brown fat thermogenesis by stimulating lipolysis, which is sensed in the brain and promotes satiation. Also able to stimulate lipolysis in white adipocytes. Also plays an important role in cellular osmoregulation: released into the systemic circulation in response to hyperosmolality and acts at different levels in the hypothalamus, pituitary and kidney to regulate water homeostasis. Also plays a role in the central nervous system, possibly by acting as a neuropeptide hormone: required for hippocampal synaptic function and neural progenitor cells maintenance. The polypeptide is Secretin (Bos taurus (Bovine)).